The sequence spans 587 residues: Proteasome-associated ATPase (587 aa).

Residues A9 to P94 adopt a coiled-coil conformation. ATP is bound at residue G276 to L281. Positions Y586 to L587 are docks into pockets in the proteasome alpha-ring.

Belongs to the AAA ATPase family. As to quaternary structure, homohexamer. Assembles into a hexameric ring structure that caps the 20S proteasome core. Strongly interacts with the prokaryotic ubiquitin-like protein Pup through a hydrophobic interface; the interacting region of ARC lies in its N-terminal coiled-coil domain. There is one Pup binding site per ARC hexamer ring. Upon ATP-binding, the C-terminus of ARC interacts with the alpha-rings of the proteasome core, possibly by binding to the intersubunit pockets.

It participates in protein degradation; proteasomal Pup-dependent pathway. Functionally, ATPase which is responsible for recognizing, binding, unfolding and translocation of pupylated proteins into the bacterial 20S proteasome core particle. May be essential for opening the gate of the 20S proteasome via an interaction with its C-terminus, thereby allowing substrate entry and access to the site of proteolysis. Thus, the C-termini of the proteasomal ATPase may function like a 'key in a lock' to induce gate opening and therefore regulate proteolysis. This Thermomonospora curvata (strain ATCC 19995 / DSM 43183 / JCM 3096 / KCTC 9072 / NBRC 15933 / NCIMB 10081 / Henssen B9) protein is Proteasome-associated ATPase.